We begin with the raw amino-acid sequence, 151 residues long: Large ribosomal subunit protein bL9 (151 aa).

The protein belongs to the bacterial ribosomal protein bL9 family.

In terms of biological role, binds to the 23S rRNA. In Dehalococcoides mccartyi (strain ATCC BAA-2100 / JCM 16839 / KCTC 5957 / BAV1), this protein is Large ribosomal subunit protein bL9.